A 464-amino-acid chain; its full sequence is MHERTFHIMTFGCQMNVNDSDWLARALEARGFTQVPEHEAAIYIINTCSVRDKPEQKVYSLLGRIRRETKNRRNVTVCVGGCVAQQIGKGFFKRFSQVRLVFGTDGAASAPQAIERLVQEPHARISLLDFSEEFPERDAGWENGEVPVSAYVNIMQGCNNFCAYCIVPYTRGRQKSRSSAAVLDECRTLVGNGAREITLLGQNVNSYGLDPHGDGTTFARLLHDVAAIPGLERLRFMTPHPKDIAGEVIEAFGALKNLCPRVHLPLQSGSDRVLKAMGRKYDMARYMDIVTRLKAVRPDIQITSDLIVGFPGETEADFEQTLEAMRTVPFVQSFSFIYSDRPGTRAEMLPGKLSREEKTARLVRLQEVQNEYSEAALQAMVGKTVMVLFESPSPKSAAGSGTDAQNAAEESGRTASSWQGRDEHGFILNVHLPAPADLYGKIMPVTVTAARKHSLTGEPAGESC.

Residues 4 to 119 form the MTTase N-terminal domain; it reads RTFHIMTFGC…APQAIERLVQ (116 aa). [4Fe-4S] cluster contacts are provided by cysteine 13, cysteine 48, cysteine 82, cysteine 158, cysteine 162, and cysteine 165. Positions 144-375 constitute a Radical SAM core domain; sequence GEVPVSAYVN…QEVQNEYSEA (232 aa). The TRAM domain occupies 378-461; sequence QAMVGKTVMV…KHSLTGEPAG (84 aa). The disordered stretch occupies residues 393–420; sequence SPKSAAGSGTDAQNAAEESGRTASSWQG.

It belongs to the methylthiotransferase family. MiaB subfamily. In terms of assembly, monomer. Requires [4Fe-4S] cluster as cofactor.

The protein resides in the cytoplasm. The catalysed reaction is N(6)-dimethylallyladenosine(37) in tRNA + (sulfur carrier)-SH + AH2 + 2 S-adenosyl-L-methionine = 2-methylsulfanyl-N(6)-dimethylallyladenosine(37) in tRNA + (sulfur carrier)-H + 5'-deoxyadenosine + L-methionine + A + S-adenosyl-L-homocysteine + 2 H(+). Its function is as follows. Catalyzes the methylthiolation of N6-(dimethylallyl)adenosine (i(6)A), leading to the formation of 2-methylthio-N6-(dimethylallyl)adenosine (ms(2)i(6)A) at position 37 in tRNAs that read codons beginning with uridine. The sequence is that of tRNA-2-methylthio-N(6)-dimethylallyladenosine synthase from Oleidesulfovibrio alaskensis (strain ATCC BAA-1058 / DSM 17464 / G20) (Desulfovibrio alaskensis).